We begin with the raw amino-acid sequence, 147 residues long: Large ribosomal subunit protein uL11 (147 aa).

This sequence belongs to the universal ribosomal protein uL11 family. As to quaternary structure, part of the ribosomal stalk of the 50S ribosomal subunit. Interacts with L10 and the large rRNA to form the base of the stalk. L10 forms an elongated spine to which L12 dimers bind in a sequential fashion forming a multimeric L10(L12)X complex. Post-translationally, one or more lysine residues are methylated.

Functionally, forms part of the ribosomal stalk which helps the ribosome interact with GTP-bound translation factors. This Parabacteroides distasonis (strain ATCC 8503 / DSM 20701 / CIP 104284 / JCM 5825 / NCTC 11152) protein is Large ribosomal subunit protein uL11.